Consider the following 139-residue polypeptide: Large ribosomal subunit protein uL16 (139 aa).

The span at 1-20 (MLIPRRVKHRKQHHPKRRGQ) shows a compositional bias: basic residues. The tract at residues 1-25 (MLIPRRVKHRKQHHPKRRGQAKGGT) is disordered.

This sequence belongs to the universal ribosomal protein uL16 family. As to quaternary structure, part of the 50S ribosomal subunit.

Its function is as follows. Binds 23S rRNA and is also seen to make contacts with the A and possibly P site tRNAs. The chain is Large ribosomal subunit protein uL16 from Streptomyces avermitilis (strain ATCC 31267 / DSM 46492 / JCM 5070 / NBRC 14893 / NCIMB 12804 / NRRL 8165 / MA-4680).